The chain runs to 545 residues: MVVKYTMSMSFFVIFASTVTIIVHGFPSTLDGPLNPVTAPLDPNLNPIAFDLPESDPSFVKPISEFLLPEQISVSLSYSFDSVWISWVTGEYQIGEKDSAPLDPNCVQSIVQYREFDVRRTRKQNATGHSIVYNQQYSSENGFMNYTSGIIHHVQLTGLKPNTLYRYQCGDPSLSAMSKEYYFRTMPKSTSENYPHRIVVAGDLGLTYNTSTVLGHILSNHPDLVVLLGGFSYADTYLANKTKLDCSSCHCDQNGTSSDCGSCYSSGETYQPRWDYWGRFMEPLTANVPTMMVAGEHEIEPQTENNLTFAAYSSRFAFPSNESGSFSPLYYSFNAGGAHFIVLNSYTLYDNSSDQYIWLESDLIKINRSETPWVVATWSLPWYSTFKGHYREAESMRIHLEDLLYNYRVDIVFNSHVDAYERSNRVYNYTLDQCGPVYITTGAGGAGKLETQHVDDPGNIPDPSQNYSCRSSGLNSTLEPVKDETCPVKQPEYSAYRESSFGFGILEVKNETHALWSWNRNQDLYYLAADVIHIVRQPEMCSVCN.

The N-terminal stretch at 1–25 (MVVKYTMSMSFFVIFASTVTIIVHG) is a signal peptide. 2 N-linked (GlcNAc...) asparagine glycosylation sites follow: Asn125 and Asn145. Asp203 lines the Fe cation pocket. Asn209 carries an N-linked (GlcNAc...) asparagine glycan. Tyr233 contacts Fe cation. N-linked (GlcNAc...) asparagine glycosylation is found at Asn240, Asn254, Asn306, Asn321, Asn351, and Asn367. His389 (proton donor) is an active-site residue. Zn(2+) is bound at residue His416. A substrate-binding site is contributed by 416–418 (HVD). 4 N-linked (GlcNAc...) asparagine glycosylation sites follow: Asn428, Asn466, Asn475, and Asn510.

The protein belongs to the metallophosphoesterase superfamily. Purple acid phosphatase family. As to quaternary structure, homodimer. It depends on Fe cation as a cofactor. Requires Zn(2+) as cofactor. Expressed in stems, leaves, flowers and siliques.

It is found in the secreted. The enzyme catalyses a phosphate monoester + H2O = an alcohol + phosphate. The chain is Purple acid phosphatase 13 (PAP13) from Arabidopsis thaliana (Mouse-ear cress).